The primary structure comprises 646 residues: Cell surface glycoprotein MUC18 (646 aa).

The signal sequence occupies residues 1–23 (MGLPRLVCAFLLAACCCCPRVAG). 2 consecutive Ig-like V-type domains span residues 24–129 (VPGE…YRIQ) and 139–242 (PNIQ…REVT). The Extracellular portion of the chain corresponds to 24–559 (VPGEAEQPAP…RKLPEPESRG (536 aa)). 4 cysteine pairs are disulfide-bonded: C48-C116, C161-C223, C272-C320, and C365-C407. N56 carries N-linked (GlcNAc...) asparagine glycosylation. Ig-like C2-type domains are found at residues 244–330 (PVFY…TMIS), 335–424 (PQEL…QLVN), and 430–510 (PPWM…KNTS). The disordered stretch occupies residues 278 to 299 (PPPHFSISKQNPSTREAEEETT). N418, N449, N467, N508, N518, N527, and N544 each carry an N-linked (GlcNAc...) asparagine glycan. C452 and C499 are disulfide-bonded. The disordered stretch occupies residues 525 to 554 (DSNTTTGLSTSTASPHTRANSTSTERKLPE). A compositionally biased stretch (polar residues) spans 533 to 547 (STSTASPHTRANSTS). The chain crosses the membrane as a helical span at residues 560–583 (VVIVAVIVCILVLAVLGAVLYFLY). The Cytoplasmic portion of the chain corresponds to 584–646 (KKGKLPCRRS…QGEKYIDLRH (63 aa)). Phosphoserine is present on residues S606, S614, and S628. The tract at residues 620-646 (EMGLLQGSSGDKRAPGDQGEKYIDLRH) is disordered. Residues 629–646 (GDKRAPGDQGEKYIDLRH) show a composition bias toward basic and acidic residues.

As to expression, detected in endothelial cells in vascular tissue throughout the body. May appear at the surface of neural crest cells during their embryonic migration. Appears to be limited to vascular smooth muscle in normal adult tissues. Associated with tumor progression and the development of metastasis in human malignant melanoma. Expressed most strongly on metastatic lesions and advanced primary tumors and is only rarely detected in benign melanocytic nevi and thin primary melanomas with a low probability of metastasis.

The protein localises to the membrane. In terms of biological role, plays a role in cell adhesion, and in cohesion of the endothelial monolayer at intercellular junctions in vascular tissue. Its expression may allow melanoma cells to interact with cellular elements of the vascular system, thereby enhancing hematogeneous tumor spread. Could be an adhesion molecule active in neural crest cells during embryonic development. Acts as a surface receptor that triggers tyrosine phosphorylation of FYN and PTK2/FAK1, and a transient increase in the intracellular calcium concentration. The chain is Cell surface glycoprotein MUC18 (MCAM) from Homo sapiens (Human).